A 194-amino-acid chain; its full sequence is uncharacterized protein (194 aa).

The tract at residues 62–93 is disordered; sequence GGAGRRTSKAQRVHPQPSHQRQPPPPQHPGPY.

Expressed most abundantly in the brain at protein level. Present in cortex, cerebellum and midbrain. Found in neurons. Elevated expressions detected in Alzheimer brain samples. Also expressed in testis.

It localises to the cytoplasm. This is an uncharacterized protein from Homo sapiens (Human).